The chain runs to 376 residues: MENSRSTLIIFFAYTTIILIGSINCRDNNNNNLVTNQSALFVFGDSVFDAGNNNYIDTLPSFRSNYWPYGQTTFKFPTGRVSDGRTIPDFIAEYAWLPLIPAYLQPSNGKNQFPYGVSFASAGAGALVGTFPGMVINLKSQLNNFKKVEKLLRSTLGEAQGKMVISRAVYLFHIGVNDYQYPFSTNSSIFQSSPQEIYVDFVVGNTTAVIKEVYKIGGRKFGFLNMGAYDCAPASLIIDQTKIGTCFKPVTELINLHNEKLESGLRRLERELSGFKYALHDYHTSLSVRMNNPSKYGFKEGKMACCGTGPLRGINTCGGRMGVSQSYELCEKVTDYLFFDHFHLTEKAHQQIAELIWSGPTNVTKPYNLQALFELN.

Residues 1-25 form the signal peptide; the sequence is MENSRSTLIIFFAYTTIILIGSINC. Residue Asn36 is glycosylated (N-linked (GlcNAc...) asparagine). Catalysis depends on Ser46, which acts as the Nucleophile. Residues Asn186 and Asn205 are each glycosylated (N-linked (GlcNAc...) asparagine). Residues Asp340 and His343 contribute to the active site. The N-linked (GlcNAc...) asparagine glycan is linked to Asn362.

It belongs to the 'GDSL' lipolytic enzyme family. In terms of tissue distribution, expressed seedlings, roots and stems.

The protein resides in the secreted. In terms of biological role, involved in the resistance to the necrotropic bacteria Erwinia carotovora, probably via negative regulation of auxin signaling. Possesses lipase and antimicrobial activities, inhibiting germination of fungal spores (e.g. Alternaria brassicicola). The protein is GDSL esterase/lipase 2 (GLIP2) of Arabidopsis thaliana (Mouse-ear cress).